The chain runs to 177 residues: Thymidine kinase (177 aa).

Residue 11–18 (GPMFSGKS) coordinates ATP. The active-site Proton acceptor is the Glu83. Phe113 serves as a coordination point for substrate. Zn(2+)-binding residues include Cys138 and Cys141. 157–161 (IEIIG) serves as a coordination point for substrate. Residues Cys170 and Cys173 each coordinate Zn(2+).

It belongs to the thymidine kinase family. Homotetramer. Two molecules of substrate bind to each enzyme tetramer.

The enzyme catalyses thymidine + ATP = dTMP + ADP + H(+). Its function is as follows. Phosphorylates thymidine and thymidine analogs, such as azidothymidine (AZT). Part of the salvage pathway for pyrimidine deoxyribonucleotide synthesis. This is Thymidine kinase (OPG101) from Variola virus.